A 313-amino-acid chain; its full sequence is Methionyl-tRNA formyltransferase (313 aa).

109–112 provides a ligand contact to (6S)-5,6,7,8-tetrahydrofolate; sequence SLLP.

The protein belongs to the Fmt family.

The enzyme catalyses L-methionyl-tRNA(fMet) + (6R)-10-formyltetrahydrofolate = N-formyl-L-methionyl-tRNA(fMet) + (6S)-5,6,7,8-tetrahydrofolate + H(+). Functionally, attaches a formyl group to the free amino group of methionyl-tRNA(fMet). The formyl group appears to play a dual role in the initiator identity of N-formylmethionyl-tRNA by promoting its recognition by IF2 and preventing the misappropriation of this tRNA by the elongation apparatus. This chain is Methionyl-tRNA formyltransferase, found in Thermotoga sp. (strain RQ2).